Consider the following 319-residue polypeptide: Putative metal ion transporter YfjQ (319 aa).

The next 2 membrane-spanning stretches (helical) occupy residues 254–274 (IMMTLTIVSTIFIPLTFIAGV) and 290–310 (GYFAVLGLMAALVIGMLIWFV).

It belongs to the CorA metal ion transporter (MIT) (TC 1.A.35) family.

The protein localises to the cell membrane. The polypeptide is Putative metal ion transporter YfjQ (yfjQ) (Bacillus subtilis (strain 168)).